The chain runs to 262 residues: ATP synthase subunit a (262 aa).

6 helical membrane passes run 24–44, 84–104, 129–149, 165–185, 194–214, and 228–248; these read AVHL…LFVF, VIAP…AIDL, DISA…FYTV, PFNH…TLLA, LFGN…MYMA, and LVWA…FMML.

The protein belongs to the ATPase A chain family. As to quaternary structure, F-type ATPases have 2 components, CF(1) - the catalytic core - and CF(0) - the membrane proton channel. CF(1) has five subunits: alpha(3), beta(3), gamma(1), delta(1), epsilon(1). CF(0) has three main subunits: a(1), b(2) and c(9-12). The alpha and beta chains form an alternating ring which encloses part of the gamma chain. CF(1) is attached to CF(0) by a central stalk formed by the gamma and epsilon chains, while a peripheral stalk is formed by the delta and b chains.

It localises to the cell inner membrane. Its function is as follows. Key component of the proton channel; it plays a direct role in the translocation of protons across the membrane. The protein is ATP synthase subunit a of Actinobacillus pleuropneumoniae serotype 7 (strain AP76).